We begin with the raw amino-acid sequence, 234 residues long: Sugar fermentation stimulation protein homolog (234 aa).

Belongs to the SfsA family.

The sequence is that of Sugar fermentation stimulation protein homolog from Pectobacterium atrosepticum (strain SCRI 1043 / ATCC BAA-672) (Erwinia carotovora subsp. atroseptica).